Here is a 250-residue protein sequence, read N- to C-terminus: Small ribosomal subunit protein uS2 (250 aa).

The protein belongs to the universal ribosomal protein uS2 family.

This is Small ribosomal subunit protein uS2 from Paraburkholderia xenovorans (strain LB400).